The sequence spans 150 residues: Nucleoside diphosphate kinase (150 aa).

Positions 9, 57, 85, 91, 102, and 112 each coordinate ATP. The active-site Pros-phosphohistidine intermediate is the histidine 115.

Belongs to the NDK family. In terms of assembly, homotetramer. Requires Mg(2+) as cofactor.

It is found in the cytoplasm. It carries out the reaction a 2'-deoxyribonucleoside 5'-diphosphate + ATP = a 2'-deoxyribonucleoside 5'-triphosphate + ADP. The catalysed reaction is a ribonucleoside 5'-diphosphate + ATP = a ribonucleoside 5'-triphosphate + ADP. Its function is as follows. Major role in the synthesis of nucleoside triphosphates other than ATP. The ATP gamma phosphate is transferred to the NDP beta phosphate via a ping-pong mechanism, using a phosphorylated active-site intermediate. This chain is Nucleoside diphosphate kinase, found in Staphylococcus carnosus (strain TM300).